Consider the following 442-residue polypeptide: MSEMTPREIVHELDAHIIGQKKAKRSVAVALRNRWRRMQLDVDFRQEVTPKNILMIGPTGVGKTEIARRLAKLANAPFIKVEATKFTEVGYVGKEVEQIIRDLTDIAIKLTREQQMGKCRQLAEEHAEERILDALLPKPKNDWESTDTDTGSNTRQIFRKKLREGQLDDKEIDIDVAQPQIGIEIMSPPGMEEMTNQLQSLFKNMGQAPAKRRKMKIKEAFKLLIEEEAAKLVNQEDLKEQAIEMVEQHGIVFLDEIDKICKRGETSGPDVSREGVQRDLLPLVEGCTVTTKHGMVKTDHILFIASGAFQMAKPSDLIPELQGRLPIRVELDALSADDFKRILTEPHASLTEQYVALMGTEGVKVEFTESGIESIAKAAWQVNERTENIGARRLHTVMEKLMEDISYEASDKSGSAFVIDADYVSAHLDNLVQDEDLSRFIL.

ATP contacts are provided by residues Ile-18, 60–65 (GVGKTE), Asp-255, Glu-320, and Arg-392.

Belongs to the ClpX chaperone family. HslU subfamily. In terms of assembly, a double ring-shaped homohexamer of HslV is capped on each side by a ring-shaped HslU homohexamer. The assembly of the HslU/HslV complex is dependent on binding of ATP.

Its subcellular location is the cytoplasm. In terms of biological role, ATPase subunit of a proteasome-like degradation complex; this subunit has chaperone activity. The binding of ATP and its subsequent hydrolysis by HslU are essential for unfolding of protein substrates subsequently hydrolyzed by HslV. HslU recognizes the N-terminal part of its protein substrates and unfolds these before they are guided to HslV for hydrolysis. The protein is ATP-dependent protease ATPase subunit HslU of Shewanella putrefaciens (strain CN-32 / ATCC BAA-453).